The sequence spans 225 residues: Large ribosomal subunit protein bL25 (225 aa).

The disordered stretch occupies residues 206–225 (EDSKNKITKDNETNKDKSNL).

Belongs to the bacterial ribosomal protein bL25 family. CTC subfamily. In terms of assembly, part of the 50S ribosomal subunit; part of the 5S rRNA/L5/L18/L25 subcomplex. Contacts the 5S rRNA. Binds to the 5S rRNA independently of L5 and L18.

This is one of the proteins that binds to the 5S RNA in the ribosome where it forms part of the central protuberance. This Vesicomyosocius okutanii subsp. Calyptogena okutanii (strain HA) protein is Large ribosomal subunit protein bL25.